The following is a 127-amino-acid chain: Glycine cleavage system H protein (127 aa).

A Lipoyl-binding domain is found at K22–E104. An N6-lipoyllysine modification is found at K63.

This sequence belongs to the GcvH family. As to quaternary structure, the glycine cleavage system is composed of four proteins: P, T, L and H. Requires (R)-lipoate as cofactor.

Its function is as follows. The glycine cleavage system catalyzes the degradation of glycine. The H protein shuttles the methylamine group of glycine from the P protein to the T protein. In terms of biological role, is also involved in protein lipoylation via its role as an octanoyl/lipoyl carrier protein intermediate. This chain is Glycine cleavage system H protein, found in Bacillus velezensis (strain DSM 23117 / BGSC 10A6 / LMG 26770 / FZB42) (Bacillus amyloliquefaciens subsp. plantarum).